Reading from the N-terminus, the 61-residue chain is Probradykinin-2 (61 aa).

The first 22 residues, 1 to 22, serve as a signal peptide directing secretion; it reads MSFLKKSLFLVLFLGLVSFSIC. A propeptide spanning residues 23-50 is cleaved from the precursor; it reads EEEKRETEEEENEDEIEEQSEEKKRFEP. Residues 24–61 are disordered; sequence EEKRETEEEENEDEIEEQSEEKKRFEPVPPGFTPFRQT. A compositionally biased stretch (acidic residues) spans 30–42; the sequence is EEEENEDEIEEQS. Pro52 bears the 4-hydroxyproline mark.

It belongs to the frog skin active peptide (FSAP) family. Bradykinin-related peptide subfamily. As to expression, expressed by the skin glands.

The protein localises to the secreted. May produce in vitro relaxation of rat arterial smooth muscle and constriction of intestinal smooth muscle. May target bradykinin receptors (BDKRB). The chain is Probradykinin-2 from Pithecopus azureus (Orange-legged monkey tree frog).